Here is a 153-residue protein sequence, read N- to C-terminus: Putative WASP homolog-associated protein with actin, membranes and microtubules-like protein 1 (153 aa).

Residues 113 to 151 adopt a coiled-coil conformation; that stretch reads AIQFYEIQLELYEVKFEILKNKEILLTTQLDSLERLIKD.

The chain is Putative WASP homolog-associated protein with actin, membranes and microtubules-like protein 1 (WHAMMP3) from Homo sapiens (Human).